The following is a 132-amino-acid chain: Small ribosomal subunit protein uS8c (132 aa).

The protein belongs to the universal ribosomal protein uS8 family. In terms of assembly, part of the 30S ribosomal subunit.

It is found in the plastid. Its subcellular location is the chloroplast. Functionally, one of the primary rRNA binding proteins, it binds directly to 16S rRNA central domain where it helps coordinate assembly of the platform of the 30S subunit. This is Small ribosomal subunit protein uS8c (rps8) from Drimys granadensis.